The following is a 338-amino-acid chain: Nicotinate-nucleotide--dimethylbenzimidazole phosphoribosyltransferase (338 aa).

Catalysis depends on Glu-305, which acts as the Proton acceptor.

It belongs to the CobT family. As to quaternary structure, homodimer.

The enzyme catalyses 5,6-dimethylbenzimidazole + nicotinate beta-D-ribonucleotide = alpha-ribazole 5'-phosphate + nicotinate + H(+). The protein operates within nucleoside biosynthesis; alpha-ribazole biosynthesis; alpha-ribazole from 5,6-dimethylbenzimidazole: step 1/2. Catalyzes the synthesis of alpha-ribazole-5'-phosphate from nicotinate mononucleotide (NAMN) and 5,6-dimethylbenzimidazole (DMB). The polypeptide is Nicotinate-nucleotide--dimethylbenzimidazole phosphoribosyltransferase (cobU) (Sinorhizobium sp).